The primary structure comprises 514 residues: ATP synthase subunit alpha (514 aa).

Gly-170 to Thr-177 lines the ATP pocket.

This sequence belongs to the ATPase alpha/beta chains family. F-type ATPases have 2 components, CF(1) - the catalytic core - and CF(0) - the membrane proton channel. CF(1) has five subunits: alpha(3), beta(3), gamma(1), delta(1), epsilon(1). CF(0) has three main subunits: a(1), b(2) and c(9-12). The alpha and beta chains form an alternating ring which encloses part of the gamma chain. CF(1) is attached to CF(0) by a central stalk formed by the gamma and epsilon chains, while a peripheral stalk is formed by the delta and b chains.

The protein resides in the cell inner membrane. It carries out the reaction ATP + H2O + 4 H(+)(in) = ADP + phosphate + 5 H(+)(out). Produces ATP from ADP in the presence of a proton gradient across the membrane. The alpha chain is a regulatory subunit. The chain is ATP synthase subunit alpha from Psychrobacter cryohalolentis (strain ATCC BAA-1226 / DSM 17306 / VKM B-2378 / K5).